Consider the following 878-residue polypeptide: Pyruvate, phosphate dikinase (878 aa).

An N-terminal region spans residues 1–347 (MKKLIYYFGS…LYILQTRTAK (347 aa)). R96 provides a ligand contact to ATP. Residues 348 to 404 (RTAIAAIKIAVQMVEEKLISKEQALMRIDPESLNQLLHTRIDYSKGLTSIADGLPAS) form a linker 1 region. The tract at residues 405-502 (PGAATGIIVF…ILKQDDIITI (98 aa)) is central. T457 carries the post-translational modification Phosphothreonine; by PDRP1. H459 functions as the Tele-phosphohistidine intermediate in the catalytic mechanism. Positions 503–537 (DGGTGKVFLGAVPLIQPTFSEESKLILEWADETSK) are linker 2. Positions 538-878 (LKIRTNAETV…AAAQAKIKHG (341 aa)) are C-terminal. R565, R621, E749, G770, T771, N772, and D773 together coordinate substrate. E749 provides a ligand contact to Mg(2+). Mg(2+) is bound at residue D773. Catalysis depends on C835, which acts as the Proton donor.

Belongs to the PEP-utilizing enzyme family. In terms of assembly, homodimer. The cofactor is Mg(2+). Phosphorylation of Thr-457 in the dark inactivates the enzyme. Dephosphorylation upon light stimulation reactivates the enzyme.

The enzyme catalyses pyruvate + phosphate + ATP = phosphoenolpyruvate + AMP + diphosphate + H(+). Its activity is regulated as follows. Activated by light-induced dephosphorylation. Inhibited by dark-induced phosphorylation. Both reactions are catalyzed by PDRP1. Functionally, catalyzes the reversible phosphorylation of pyruvate and phosphate. In Rickettsia bellii (strain RML369-C), this protein is Pyruvate, phosphate dikinase (ppdK).